An 856-amino-acid polypeptide reads, in one-letter code: Translation initiation factor IF-2 (856 aa).

Residues 356 to 526 form the tr-type G domain; the sequence is PRAPVVTVMG…LLIADLLELK (171 aa). The tract at residues 365–372 is G1; that stretch reads GHVDHGKT. Position 365–372 (365–372) interacts with GTP; it reads GHVDHGKT. Positions 390–394 are G2; sequence GITQH. Positions 412 to 415 are G3; that stretch reads DTPG. GTP-binding positions include 412–416 and 466–469; these read DTPGH and NKID. Residues 466-469 form a G4 region; it reads NKID. A G5 region spans residues 502–504; sequence SAK.

This sequence belongs to the TRAFAC class translation factor GTPase superfamily. Classic translation factor GTPase family. IF-2 subfamily.

Its subcellular location is the cytoplasm. Its function is as follows. One of the essential components for the initiation of protein synthesis. Protects formylmethionyl-tRNA from spontaneous hydrolysis and promotes its binding to the 30S ribosomal subunits. Also involved in the hydrolysis of GTP during the formation of the 70S ribosomal complex. The chain is Translation initiation factor IF-2 from Ehrlichia ruminantium (strain Gardel).